A 944-amino-acid polypeptide reads, in one-letter code: Calcium-transporting ATPase type 2C member 2 (944 aa).

At Met-1–Tyr-104 the chain is on the cytoplasmic side. The tract at residues Val-69–Val-93 is interaction with ORAI1. Residues Leu-105 to Leu-125 traverse the membrane as a helical segment. At Thr-126–Lys-127 the chain is on the extracellular side. The chain crosses the membrane as a helical span at residues Glu-128–Ile-148. Over Gln-149 to Ser-229 the chain is Cytoplasmic. Residues Pro-230–Val-250 traverse the membrane as a helical segment. The Extracellular segment spans residues Gln-251–Lys-291. The residue at position 262 (Thr-262) is a Phosphothreonine. Residue Ser-266 is modified to Phosphoserine. The chain crosses the membrane as a helical span at residues Leu-292–Trp-312. The Cytoplasmic segment spans residues Val-313 to Ala-329. 4 residues coordinate Ca(2+): Val-330, Ala-331, Ile-333, and Glu-335. A helical transmembrane segment spans residues Val-330–Leu-350. Topologically, residues Arg-351–Ser-748 are extracellular. The active-site 4-aspartylphosphate intermediate is the Asp-377. Mg(2+) contacts are provided by Asp-672 and Asp-676. The helical transmembrane segment at Thr-749–Met-769 threads the bilayer. 2 residues coordinate Ca(2+): Asn-766 and Asp-770. Residues Asp-770–Ala-802 lie on the Cytoplasmic side of the membrane. The helical transmembrane segment at Leu-803–Trp-823 threads the bilayer. At Arg-824 to Arg-835 the chain is on the extracellular side. A helical membrane pass occupies residues Thr-836 to Leu-853. The Cytoplasmic segment spans residues Ser-854 to Met-872. Residues Phe-873–Leu-893 form a helical membrane-spanning segment. The Extracellular portion of the chain corresponds to Gln-894 to Ser-903. Residues Ala-904–Leu-924 form a helical membrane-spanning segment. Residues Lys-925–Val-944 lie on the Cytoplasmic side of the membrane.

The protein belongs to the cation transport ATPase (P-type) (TC 3.A.3) family. Type IIA subfamily. Interacts (via N-terminus) with ORAI1 (via N- and C-termini); this interaction regulates Ca(2+) influx at the plasma membrane.

Its subcellular location is the golgi apparatus. It localises to the trans-Golgi network membrane. The protein resides in the cell membrane. It is found in the basolateral cell membrane. The catalysed reaction is Ca(2+)(in) + ATP + H2O = Ca(2+)(out) + ADP + phosphate + H(+). It catalyses the reaction Mn(2+)(in) + ATP + H2O = Mn(2+)(out) + ADP + phosphate + H(+). In terms of biological role, ATP-driven pump that supplies the Golgi apparatus with Ca(2+) and Mn(2+) ions, both essential cofactors for processing and trafficking of newly synthesized proteins in the secretory pathway. Within a catalytic cycle, acquires Ca(2+) or Mn(2+) ions on the cytoplasmic side of the membrane and delivers them to the lumenal side. The transfer of ions across the membrane is coupled to ATP hydrolysis and is associated with a transient phosphorylation that shifts the pump conformation from inward-facing to outward-facing state. Induces Ca(2+) influx independently of its ATP-driven pump function. At the basolateral membrane of mammary epithelial cells, interacts with Ca(2+) channel ORAI1 and mediates Ca(2+) entry independently of the Ca(2+) content of endoplasmic reticulum or Golgi stores. May facilitate transepithelial transport of large quantities of Ca(2+) for milk secretion via activation of Ca(2+) influx channels at the plasma membrane and active Ca(2+) transport at the Golgi apparatus. The polypeptide is Calcium-transporting ATPase type 2C member 2 (Atp2c2) (Rattus norvegicus (Rat)).